Consider the following 452-residue polypeptide: Golgi reassembly-stacking protein 2 (452 aa).

The N-myristoyl glycine moiety is linked to residue glycine 2. PDZ GRASP-type domains follow at residues 15–105 (EGYH…FCSF) and 111–199 (NVWH…YGYL). The GRASP stretch occupies residues 15-215 (EGYHVLRVQE…PFEEGKKISL (201 aa)). A dimethylated arginine mark is found at arginine 30 and arginine 47. The interval 194 to 199 (IGYGYL) is important for membrane binding. Serine 214 bears the Phosphoserine mark. A phosphothreonine mark is found at threonine 222 and threonine 225. Low complexity predominate over residues 372 to 424 (PESSSAASSGELLSSLPPTSNAPSDPATTTAKADAASSLTVDVTPPTAKAPTT). The interval 372–452 (PESSSAASSG…AVDANASESP (81 aa)) is disordered. Serine 409 is subject to Phosphoserine. Residues threonine 415 and threonine 433 each carry the phosphothreonine modification. 4 positions are modified to phosphoserine: serine 436, serine 441, serine 449, and serine 451.

Belongs to the GORASP family. In terms of assembly, homodimer. Homooligomer. ER stress induces phosphorylation-dependent monomerization. Interacts with BLZF1/Golgin 45. Identified in a complex with RAB2 and GORASP2. Interacts with JAM2 and JAM3. Interacts with members of the p24 cargo receptors. Interacts with CNIH1 and the cytoplasmic domain of transmembrane TGFA, prior its transit in the trans-Golgi. Interacts with KCTD5. Interacts with TMED2 and TMED3. Interacts with SEC16A in response to ER stress. Interacts (via PDZ GRASP-type 1 domain) with core-glycosylated CFTR in response to ER stress. Myristoylated. Myristoylation is essential for the Golgi targeting. In terms of processing, palmitoylated. Post-translationally, phosphorylated in mitotic cells. ER stress-induced phosphorylation at Ser-441 induces monomerization and subsequent relocalization from Golgi to ER which is essential for mediating unconventional (ER/Golgi-independent) trafficking of CFTR to the cell membrane.

It is found in the golgi apparatus membrane. It localises to the endoplasmic reticulum membrane. The protein resides in the golgi apparatus. Its function is as follows. Key structural protein of the Golgi apparatus. The membrane cisternae of the Golgi apparatus adhere to each other to form stacks, which are aligned side by side to form the Golgi ribbon. Acting in concert with GORASP1/GRASP65, is required for the formation and maintenance of the Golgi ribbon, and may be dispensable for the formation of stacks. However, other studies suggest that GORASP2 plays a role in the assembly and membrane stacking of the Golgi cisternae, and in the process by which Golgi stacks reform after breakdown during mitosis and meiosis. May regulate the intracellular transport and presentation of a defined set of transmembrane proteins, such as transmembrane TGFA. Required for normal acrosome formation during spermiogenesis and normal male fertility, probably by promoting colocalization of JAM2 and JAM3 at contact sites between germ cells and Sertoli cells. Mediates ER stress-induced unconventional (ER/Golgi-independent) trafficking of core-glycosylated CFTR to cell membrane. This chain is Golgi reassembly-stacking protein 2 (GORASP2), found in Homo sapiens (Human).